The following is a 309-amino-acid chain: 2-dehydro-3-deoxygluconokinase (309 aa).

Substrate contacts are provided by residues 34 to 38 (GAEVN), Y89, 103 to 105 (YYR), and R167. ATP-binding positions include 165-167 (NYR), S193, 219-225 (KRGAKGA), 248-251 (GAGD), and N275. D251 lines the substrate pocket. D251 functions as the Proton acceptor in the catalytic mechanism. Residue D287 coordinates substrate.

This sequence belongs to the carbohydrate kinase pfkB family. As to quaternary structure, homohexamer; trimer of dimers.

The enzyme catalyses 2-dehydro-3-deoxy-D-gluconate + ATP = 2-dehydro-3-deoxy-6-phospho-D-gluconate + ADP + H(+). Its pathway is carbohydrate acid metabolism; 2-dehydro-3-deoxy-D-gluconate degradation; D-glyceraldehyde 3-phosphate and pyruvate from 2-dehydro-3-deoxy-D-gluconate: step 1/2. Its function is as follows. Involved in the degradation of glucose via the semi-phosphorylative Entner-Doudoroff pathway. Catalyzes the phosphorylation of 2-keto-3-deoxygluconate (KDG) to produce 2-keto-3-deoxy-6-phosphogluconate (KDPG). This is 2-dehydro-3-deoxygluconokinase (kdgK) from Thermus thermophilus (strain ATCC 27634 / DSM 579 / HB8).